A 517-amino-acid chain; its full sequence is Nucleoside transporter FUN26 (517 aa).

The segment at 1 to 63 (MSTSADTDTI…EREQSVSTEP (63 aa)) is disordered. The span at 25–44 (THSEEISRSGEEHESENNEH) shows a compositional bias: basic and acidic residues. A phosphoserine mark is found at serine 45 and serine 58. 11 helical membrane passes run 76 to 96 (LSYI…NCIL), 116 to 136 (IFTS…NIYL), 151 to 171 (LVWE…HFLL), 174 to 194 (WFNF…TAMT), 214 to 234 (MVGQ…LAFI), 243 to 263 (GGIL…VVMF), 344 to 364 (LVLS…FASA), 367 to 387 (VTGL…LWNL), 411 to 431 (TFIY…FTAI), 446 to 466 (IVDL…GHVI), and 492 to 512 (IFVS…VFII).

Belongs to the SLC29A/ENT transporter (TC 2.A.57) family.

It localises to the membrane. Has broad nucleoside selectivity (uridine, adenosine and cytidine) and most likely functions to transport nucleosides across intracellular membranes. The protein is Nucleoside transporter FUN26 (FUN26) of Saccharomyces cerevisiae (strain ATCC 204508 / S288c) (Baker's yeast).